The primary structure comprises 265 residues: Glutamate racemase (265 aa).

Residues 9-10 (DS) and 41-42 (YG) each bind substrate. Cys-73 acts as the Proton donor/acceptor in catalysis. Substrate is bound at residue 74 to 75 (NT). Cys-180 functions as the Proton donor/acceptor in the catalytic mechanism. 181–182 (TH) lines the substrate pocket.

The protein belongs to the aspartate/glutamate racemases family.

It catalyses the reaction L-glutamate = D-glutamate. It participates in cell wall biogenesis; peptidoglycan biosynthesis. Functionally, provides the (R)-glutamate required for cell wall biosynthesis. This chain is Glutamate racemase, found in Aliivibrio salmonicida (strain LFI1238) (Vibrio salmonicida (strain LFI1238)).